Here is a 431-residue protein sequence, read N- to C-terminus: MADLLWQKPGVAVDAKIQTFLAGDDVILDREFFLHDIAASAAHAQGLQHIGILSADELAGLLRELDVLAQDFRAGRFVLDTQYEDGHSAIEARLTERLGDAGRKIHTGRSRNDQILVATRLWLKEKLQRVAQLSAEVAKVALDRAQAEKDLPIPGYTHIQRAVVSSAGMWWAGWAEAFIDNAIRARDTHALVDANPLGTAAGYGVNLPLDREHTTAALGFARMQISPIYAQLSRGKFELAALEALGAATLDLRRIAWDLSLFTSAEFGFVALPAQYTTGSSIMPNKRNPDVIELMRATHASVAAARTEIEQLLSLPSGYHRDLQSSKGAIFHGFGRGLAALELLPSLLANLEWRDDKLRAAIDSGMYATDVAVEAAVAGVPFREAYKAAAAGADSAGQGRTPEGSLAARVSPGSAADLRLDELRARWQALS.

The protein belongs to the lyase 1 family. Argininosuccinate lyase subfamily.

The protein resides in the cytoplasm. The enzyme catalyses 2-(N(omega)-L-arginino)succinate = fumarate + L-arginine. It functions in the pathway amino-acid biosynthesis; L-arginine biosynthesis; L-arginine from L-ornithine and carbamoyl phosphate: step 3/3. This Stenotrophomonas maltophilia (strain R551-3) protein is Argininosuccinate lyase.